The chain runs to 810 residues: DNA ligase (810 aa).

NAD(+) contacts are provided by residues 46–50 (DAEYD), 95–96 (SL), and glutamate 129. Lysine 131 functions as the N6-AMP-lysine intermediate in the catalytic mechanism. Residues arginine 152, glutamate 189, lysine 305, and lysine 329 each coordinate NAD(+). Cysteine 434, cysteine 437, cysteine 458, and cysteine 464 together coordinate Zn(2+). The interval 528–548 (ERRAESGTAEPPKKAAKKKGD) is disordered. One can recognise a BRCT domain in the interval 731-810 (AAASTFAGKT…DDWLAMVAQG (80 aa)).

The protein belongs to the NAD-dependent DNA ligase family. LigA subfamily. Requires Mg(2+) as cofactor. Mn(2+) serves as cofactor.

It carries out the reaction NAD(+) + (deoxyribonucleotide)n-3'-hydroxyl + 5'-phospho-(deoxyribonucleotide)m = (deoxyribonucleotide)n+m + AMP + beta-nicotinamide D-nucleotide.. In terms of biological role, DNA ligase that catalyzes the formation of phosphodiester linkages between 5'-phosphoryl and 3'-hydroxyl groups in double-stranded DNA using NAD as a coenzyme and as the energy source for the reaction. It is essential for DNA replication and repair of damaged DNA. In Methylobacterium radiotolerans (strain ATCC 27329 / DSM 1819 / JCM 2831 / NBRC 15690 / NCIMB 10815 / 0-1), this protein is DNA ligase.